Reading from the N-terminus, the 2382-residue chain is Highly reducing polyketide synthase srdA (2382 aa).

The interval 1–25 is disordered; the sequence is MAPHSTLDSDYSSGSSTPTSASAAG. The 431-residue stretch at 44–474 folds into the Ketosynthase family 3 (KS3) domain; it reads QEPIAIIGMG…GANAHAILEA (431 aa). Active-site for beta-ketoacyl synthase activity residues include C217, H352, and H390. Residues 580–891 are malonyl-CoA:ACP transacylase (MAT) domain; the sequence is VFTGQGAQWP…HYGSALSRGK (312 aa). The active-site For malonyltransferase activity is S672. Residues 971–1108 are N-terminal hotdog fold; sequence HDLLGSQVHG…GLVKIDSAPA (138 aa). The tract at residues 971–1274 is dehydratase (DH) domain; it reads HDLLGSQVHG…RQVSYQSGIQ (304 aa). One can recognise a PKS/mFAS DH domain in the interval 971–1275; that stretch reads HDLLGSQVHG…QVSYQSGIQQ (305 aa). H1003 (proton acceptor; for dehydratase activity) is an active-site residue. The interval 1121–1275 is C-terminal hotdog fold; it reads MEPQAPRTWY…QVSYQSGIQQ (155 aa). D1189 serves as the catalytic Proton donor; for dehydratase activity. Residues 1668–1979 are enoyl reductase (ER) domain; it reads GQIDSIFFRR…AKGHSGSVVV (312 aa). Positions 2004–2180 are ketoreductase (KR) domain; the sequence is SYLLVGCLGG…ATSIGLGMIS (177 aa). One can recognise a Carrier domain in the interval 2298–2376; sequence SVEDAVLKMI…LLSELITKKM (79 aa). Position 2335 is an O-(pantetheine 4'-phosphoryl)serine (S2335).

Functionally, highly reducing polyketide synthase; part of the gene cluster that mediates the biosynthesis of sordarial, a salicylic aldehyde structurally related to the phytotoxin pyriculol. The most interesting aspect of this pathway is formation of an aromatic product from the highly reducing polyketide synthase srdA. SrdA synthesizes a reduced polyketide chain from one molecule of acetyl-CoA and five molecules of malonyl-CoA. The polyketide chain is then reductively released as an aldehyde. The oxidoreductases srdC, srdD and srdE then oxidize one of the hydroxy groups to facilitate the intramolecular aldol condensation, followed by dehydration to yield a salicylic aldehyde. This aldehyde can undergo facile reduction by endogenous reductases to yield the alcohol 1-hydroxy-2-hydroxymethyl-3-pent-1,3-dienylbenzene. The flavin-dependent srdI counteract against the propensity of the aldehydes to be reduced under physiological conditions and is responsible for reoxidizing 1-hydroxy-2-hydroxymethyl-3-pent-1,3-dienylbenzene back to the salicylic aldehyde. This salicylic aldehyde is then selectively epoxidized by the cupin-domain-containing oxidoreductase srdB to yield the epoxide, which can be hydrolyzed stereoselectively by the hydrolase srdG to give the final product sordarial. The polypeptide is Highly reducing polyketide synthase srdA (Neurospora crassa (strain ATCC 24698 / 74-OR23-1A / CBS 708.71 / DSM 1257 / FGSC 987)).